Reading from the N-terminus, the 233-residue chain is Purine nucleoside phosphorylase DeoD-type (233 aa).

Residue His-4 coordinates a purine D-ribonucleoside. Phosphate contacts are provided by residues Gly-20, Arg-24, Arg-43, and Arg-87–Thr-90. A purine D-ribonucleoside-binding positions include Glu-162, Glu-179 to Glu-181, and Ser-203 to Asp-204. The active-site Proton donor is Asp-204.

Belongs to the PNP/UDP phosphorylase family. Homohexamer; trimer of homodimers.

The catalysed reaction is a purine D-ribonucleoside + phosphate = a purine nucleobase + alpha-D-ribose 1-phosphate. It catalyses the reaction a purine 2'-deoxy-D-ribonucleoside + phosphate = a purine nucleobase + 2-deoxy-alpha-D-ribose 1-phosphate. Catalyzes the reversible phosphorolytic breakdown of the N-glycosidic bond in the beta-(deoxy)ribonucleoside molecules, with the formation of the corresponding free purine bases and pentose-1-phosphate. This Alkaliphilus metalliredigens (strain QYMF) protein is Purine nucleoside phosphorylase DeoD-type.